Here is a 1147-residue protein sequence, read N- to C-terminus: Tip elongation aberrant protein 1 (1147 aa).

Basic residues predominate over residues 1–16 (MSFLFKRNKGSAHKPT). Residues 1–64 (MSFLFKRNKG…TGSGSHITAS (64 aa)) form a disordered region. The segment covering 18–32 (PNFSKTSTTPSTSQL) has biased composition (polar residues). Kelch repeat units follow at residues 94–144 (EIYI…LIGN), 146–198 (FIVF…CLGS), 199–253 (KICL…TFSD), 254–303 (KLYI…VVEG), 305–351 (LYVF…TLSC), and 355–402 (TLVL…SNST). 2 disordered regions span residues 384–403 (SVPT…NSTG) and 408–547 (SAFN…NAQS). Polar residues-rich tracts occupy residues 385-403 (VPTT…NSTG), 408-465 (SAFN…SNDL), and 472-489 (TRSN…LNSH). A compositionally biased stretch (low complexity) spans 502-512 (SSLNSQQLSNQ). A Phosphoserine modification is found at S503. Polar residues predominate over residues 519-547 (VSPTLSFVPSSHSMEQGNGSVASANNAQS). Positions 538-1147 (SVASANNAQS…AKEPVHDNEN (610 aa)) are interaction with tea4. Coiled-coil stretches lie at residues 611–649 (KLYE…LEKV), 716–838 (QTSS…IIDA), 879–990 (KNNE…ALEE), and 1084–1105 (IKSL…AKEK). Residues 948-1147 (KALEQRNTGA…AKEPVHDNEN (200 aa)) are retention at microtubule cell ends.

In terms of assembly, major component of the tea1 cell-end complex. Interacts with rax2, tea4 and tip1. Interacts with for3 in the presence of tea4.

It is found in the cytoplasm. It localises to the cytoskeleton. Its function is as follows. Cell polarity protein. Acts as an end marker, directing the growth machinery to the cell poles. Involved in the regulation of microtubular organization, affecting the maintenance of a single central axis. Prevents the curling of microtubule tips around the cell ends and is required for the retention of polarity factors such as pom1, tip1 and tea2 at the cell ends, necessary for the cell to grow in a straight line. Links tip1 and tea4 in a common complex. The protein is Tip elongation aberrant protein 1 (tea1) of Schizosaccharomyces pombe (strain 972 / ATCC 24843) (Fission yeast).